We begin with the raw amino-acid sequence, 122 residues long: Large ribosomal subunit protein uL18 (122 aa).

Belongs to the universal ribosomal protein uL18 family. Part of the 50S ribosomal subunit; part of the 5S rRNA/L5/L18/L25 subcomplex. Contacts the 5S and 23S rRNAs.

In terms of biological role, this is one of the proteins that bind and probably mediate the attachment of the 5S RNA into the large ribosomal subunit, where it forms part of the central protuberance. In Synechococcus sp. (strain JA-3-3Ab) (Cyanobacteria bacterium Yellowstone A-Prime), this protein is Large ribosomal subunit protein uL18.